Here is a 251-residue protein sequence, read N- to C-terminus: Adapter protein MecA (251 aa).

This sequence belongs to the MecA family. As to quaternary structure, homodimer.

Enables the recognition and targeting of unfolded and aggregated proteins to the ClpC protease or to other proteins involved in proteolysis. This chain is Adapter protein MecA, found in Streptococcus agalactiae serotype Ia (strain ATCC 27591 / A909 / CDC SS700).